Reading from the N-terminus, the 601-residue chain is Glutathione-regulated potassium-efflux system protein KefB (601 aa).

Transmembrane regions (helical) follow at residues 4–24 (SDFL…VPLA), 29–49 (IGAV…GLGF), 55–75 (EILH…GLEL), 87–107 (IFGV…GLLM), 115–135 (AAVV…LQLM), 152–172 (VLLF…LLAG), 177–197 (HFDW…LIGG), 207–227 (FIAA…LVLG), 230–250 (LFMD…GVLL), 268–288 (GLLL…GVLY), 291–311 (LLWV…VLYL), 324–344 (MQFA…FSSA), and 356–376 (ALLL…MKLV). One can recognise an RCK N-terminal domain in the interval 400 to 519 (KPQVIVVGFG…AGVTQFSRET (120 aa)).

It belongs to the monovalent cation:proton antiporter 2 (CPA2) transporter (TC 2.A.37) family. KefB subfamily. As to quaternary structure, interacts with the regulatory subunit KefG.

It localises to the cell inner membrane. In terms of biological role, pore-forming subunit of a potassium efflux system that confers protection against electrophiles. Catalyzes K(+)/H(+) antiport. The sequence is that of Glutathione-regulated potassium-efflux system protein KefB from Escherichia coli O127:H6 (strain E2348/69 / EPEC).